The following is a 1114-amino-acid chain: Extracellular sulfatase SULF-1 homolog (1114 aa).

The first 25 residues, 1–25 (MMRHSSLRLIIGGLILLLFVLNVFS), serve as a signal peptide directing secretion. Ca(2+) contacts are provided by D62, D63, and C98. C98 acts as the Nucleophile in catalysis. C98 carries the post-translational modification 3-oxoalanine (Cys). N-linked (GlcNAc...) asparagine glycans are attached at residues N122, N159, N181, N208, and N251. Ca(2+)-binding residues include D327 and H328. N447 carries an N-linked (GlcNAc...) asparagine glycan. Low complexity predominate over residues 466 to 479 (SSSSTAATLMSSTA). A disordered region spans residues 466 to 504 (SSSSTAATLMSSTAQQPEDGEEEVETDNEEDDVDGDGAM). Residues 483–502 (EDGEEEVETDNEEDDVDGDG) are compositionally biased toward acidic residues. 3 N-linked (GlcNAc...) asparagine glycosylation sites follow: N683, N713, and N743. The interval 781–812 (KQLRESNKQALAAGRRNDNRRRNDQSVLDSGA) is disordered. The segment covering 795-804 (RRNDNRRRND) has biased composition (basic and acidic residues). Residue N817 is glycosylated (N-linked (GlcNAc...) asparagine). The segment covering 876–895 (ADSKEMAREARRKLKEERQR) has biased composition (basic and acidic residues). Residues 876–901 (ADSKEMAREARRKLKEERQRKKERKR) are disordered. N-linked (GlcNAc...) asparagine glycosylation is found at N945, N955, and N974. The segment at 1073-1114 (LSKYNRLTGSQQSHMKRRPWKQTPLQQSPRFLRTHSVTPAQA) is disordered. Polar residues predominate over residues 1095–1114 (TPLQQSPRFLRTHSVTPAQA).

The protein belongs to the sulfatase family. Requires Ca(2+) as cofactor. The conversion to 3-oxoalanine (also known as C-formylglycine, FGly), of a serine or cysteine residue in prokaryotes and of a cysteine residue in eukaryotes, is critical for catalytic activity.

The protein localises to the endoplasmic reticulum. The protein resides in the golgi apparatus. It localises to the golgi stack. It is found in the cell surface. This chain is Extracellular sulfatase SULF-1 homolog (Sulf1), found in Drosophila melanogaster (Fruit fly).